The chain runs to 112 residues: Colipase (112 aa).

An N-terminal signal peptide occupies residues 1-17 (MEKVLILLLVALAVAYA). Positions 18 to 22 (VPDPR) are cleaved as a propeptide — enterostatin, activation peptide. 5 cysteine pairs are disulfide-bonded: C34-C45, C40-C56, C44-C78, C66-C86, and C80-C104.

Belongs to the colipase family. As to quaternary structure, forms a 1:1 stoichiometric complex with pancreatic lipase.

The protein localises to the secreted. Colipase is a cofactor of pancreatic lipase. It allows the lipase to anchor itself to the lipid-water interface. Without colipase the enzyme is washed off by bile salts, which have an inhibitory effect on the lipase. In terms of biological role, enterostatin has a biological activity as a satiety signal. The polypeptide is Colipase (CLPS) (Bos taurus (Bovine)).